Here is an 864-residue protein sequence, read N- to C-terminus: Probable beta-glucosidase J (864 aa).

Aspartate 233 is an active-site residue. Residues 411–578 enclose the PA14 domain; that stretch reads TGEPGYTFRV…DTDAAIQQAV (168 aa). Residues asparagine 434, asparagine 447, and asparagine 503 are each glycosylated (N-linked (GlcNAc...) asparagine).

The protein belongs to the glycosyl hydrolase 3 family.

It localises to the secreted. It catalyses the reaction Hydrolysis of terminal, non-reducing beta-D-glucosyl residues with release of beta-D-glucose.. The protein operates within glycan metabolism; cellulose degradation. Its function is as follows. Beta-glucosidases are one of a number of cellulolytic enzymes involved in the degradation of cellulosic biomass. Catalyzes the last step releasing glucose from the inhibitory cellobiose. In Neosartorya fischeri (strain ATCC 1020 / DSM 3700 / CBS 544.65 / FGSC A1164 / JCM 1740 / NRRL 181 / WB 181) (Aspergillus fischerianus), this protein is Probable beta-glucosidase J (bglJ).